Here is a 335-residue protein sequence, read N- to C-terminus: Glutamyl-tRNA reductase (335 aa).

Substrate-binding positions include 60 to 63, Ser-110, 115 to 117, and Gln-121; these read TCHR and ETE. Cys-61 (nucleophile) is an active-site residue. 189-194 contributes to the NADP(+) binding site; that stretch reads GYSEIN.

The protein belongs to the glutamyl-tRNA reductase family. As to quaternary structure, homodimer.

The enzyme catalyses (S)-4-amino-5-oxopentanoate + tRNA(Glu) + NADP(+) = L-glutamyl-tRNA(Glu) + NADPH + H(+). It participates in porphyrin-containing compound metabolism; protoporphyrin-IX biosynthesis; 5-aminolevulinate from L-glutamyl-tRNA(Glu): step 1/2. In terms of biological role, catalyzes the NADPH-dependent reduction of glutamyl-tRNA(Glu) to glutamate 1-semialdehyde (GSA). In Chlamydia trachomatis serovar L2 (strain ATCC VR-902B / DSM 19102 / 434/Bu), this protein is Glutamyl-tRNA reductase.